A 159-amino-acid polypeptide reads, in one-letter code: Neuroglobin-1 (159 aa).

Positions 3–151 (KLTEKEKELI…VVAAMSRGWA (149 aa)) constitute a Globin domain. Positions 66 and 98 each coordinate heme b.

This sequence belongs to the globin family. In terms of assembly, monomer. Homodimers and homotetramers. Mainly monomeric but also detected as part of homodimers and homotetramers.

It is found in the cytoplasm. The protein localises to the cytosol. The protein resides in the mitochondrion matrix. It carries out the reaction Fe(III)-heme b-[protein] + nitric oxide + H2O = Fe(II)-heme b-[protein] + nitrite + 2 H(+). Its function is as follows. Monomeric globin with a bis-histidyl six-coordinate heme-iron atom through which it can bind dioxygen, carbon monoxide and nitric oxide. Could help transport oxygen and increase its availability to the metabolically active neuronal tissues, though its low quantity in tissues as well as its high affinity for dioxygen, which may limit its oxygen-releasing ability, argue against it. The ferrous/deoxygenated form exhibits a nitrite reductase activity and it could produce nitric oxide which in turn inhibits cellular respiration in response to hypoxia. In its ferrous/deoxygenated state, it may also exhibit GDI (Guanine nucleotide Dissociation Inhibitor) activity toward heterotrimeric G-alpha proteins, thereby regulating signal transduction to facilitate neuroprotective responses in the wake of hypoxia and associated oxidative stress. The chain is Neuroglobin-1 (ngb1) from Oncorhynchus mykiss (Rainbow trout).